The sequence spans 617 residues: MSDNQSWNSSGSEEDLEPESGPPVERCGVLSKWTNYIHGWQDRWVDLKNNTLSYYKSEDETEYGCRGSICLSKAVITPHEFDECRFDISVNDSVWYIRAQDPDHRQRWIDSIEQHKSESGYGSESSLRRHGSMVSLVSGASSYSATSTSSFKKGHSLREKLAEMETFRDILCRQVDTLQKYFDACAGAVSKDELERDKVEDDEDDFLHNHPNEDYIHSNNGNKEKLFQHVTPKCIDGIDFKGEAITFKATTAGILATLSHCIELMVKREDSWQKRLDKEIEKRRRVEEAYKNAMTELKKKSHFGGPDYEEGPNSLINEEEFFDAVEAALDRQDKIELCQSEKGRSHWPPSPPSSEAHTAAGSHRLVQAPPSCPPPTDLVSSSDEHRFRIQVEDMVQNHMTYSLQDVGGDANWQLVVEEGEMKVYRREVEENGIVLDPLKATHSVKGVTGHEVCQYFWNVDVRNDWETTIENFHVVEKLSPNAIIVYQTHKRVWPASQRDVLYLSAIRVVPAASENEMDTWIVCNFSVDHDKAPLNRCVRAKINIAMICQTLVSPPEGNKEISRDNIQCKITYVANVNPGGWAPASVLRAVAKREYPKFLKRFTSYVQEKTADKPILF.

Positions 1–11 (MSDNQSWNSSG) are enriched in polar residues. A disordered region spans residues 1–23 (MSDNQSWNSSGSEEDLEPESGPP). The PH domain occupies 23-117 (PVERCGVLSK…WIDSIEQHKS (95 aa)). Residues 268-302 (REDSWQKRLDKEIEKRRRVEEAYKNAMTELKKKSH) adopt a coiled-coil conformation. The short motif at 320–326 (EFFDAVE) is the FFAT element. The disordered stretch occupies residues 341 to 382 (EKGRSHWPPSPPSSEAHTAAGSHRLVQAPPSCPPPTDLVSSS). The START domain maps to 383 to 611 (DEHRFRIQVE…FTSYVQEKTA (229 aa)). An N-acylsphing-4-enine contacts are provided by glutamate 466, glutamine 487, asparagine 524, and tyrosine 572.

It localises to the cytoplasm. Its subcellular location is the golgi apparatus. It is found in the endoplasmic reticulum. It carries out the reaction N-hexadecanoylsphing-4-enine(in) = N-hexadecanoylsphing-4-enine(out). May mediate the intracellular trafficking of ceramide in a non-vesicular manner. This chain is Ceramide transfer protein (cert1), found in Xenopus laevis (African clawed frog).